A 345-amino-acid chain; its full sequence is Anthranilate phosphoribosyltransferase (345 aa).

Residues G84, 87–88 (GD), T92, 94–97 (NIST), 112–120 (KHGNRSVSS), and S124 each bind 5-phospho-alpha-D-ribose 1-diphosphate. G84 contacts anthranilate. Mg(2+) is bound at residue S96. N115 contacts anthranilate. Residue R170 coordinates anthranilate. The Mg(2+) site is built by D229 and E230.

This sequence belongs to the anthranilate phosphoribosyltransferase family. Homodimer. The cofactor is Mg(2+).

The enzyme catalyses N-(5-phospho-beta-D-ribosyl)anthranilate + diphosphate = 5-phospho-alpha-D-ribose 1-diphosphate + anthranilate. The protein operates within amino-acid biosynthesis; L-tryptophan biosynthesis; L-tryptophan from chorismate: step 2/5. Catalyzes the transfer of the phosphoribosyl group of 5-phosphorylribose-1-pyrophosphate (PRPP) to anthranilate to yield N-(5'-phosphoribosyl)-anthranilate (PRA). The chain is Anthranilate phosphoribosyltransferase from Xanthomonas oryzae pv. oryzae (strain MAFF 311018).